Here is a 428-residue protein sequence, read N- to C-terminus: Aerobic C4-dicarboxylate transport protein (428 aa).

8 consecutive transmembrane segments (helical) span residues 5-27, 47-64, 77-99, 141-163, 184-206, 219-241, 326-348, and 352-374; these read LFKSLYFQVLTAIAIGILLGHFY, MIIAPVIFCTVVTGIAGM, ALLYFEIVSTIALIIGLIIVNVV, VIGAFASGNILQVLLFAVLFGFA, VIFGIINMIMRLAPIGAFGAMAF, LGQLIICFYITCILFVVLVLGSI, IVHQITLLIVLLLSSKGAAGVTG, and IVLAATLSAVGHLPVAGLALILG.

Belongs to the dicarboxylate/amino acid:cation symporter (DAACS) (TC 2.A.23) family.

It is found in the cell inner membrane. Functionally, responsible for the aerobic transport of the dicarboxylates fumarate and malate and to a lesser extent succinate, from the periplasm across the inner membrane. The polypeptide is Aerobic C4-dicarboxylate transport protein (Escherichia coli O157:H7).